Here is a 596-residue protein sequence, read N- to C-terminus: Uptake hydrogenase large subunit (596 aa).

Ni(2+)-binding residues include cysteine 75, cysteine 78, cysteine 575, and cysteine 578.

The protein belongs to the [NiFe]/[NiFeSe] hydrogenase large subunit family. In terms of assembly, heterodimer of a large and a small subunit. Ni(2+) serves as cofactor.

It localises to the cell membrane. It catalyses the reaction H2 + A = AH2. This enzyme recycles the H(2) produced by nitrogenase to increase the production of ATP and to protect nitrogenase against inhibition or damage by O(2) under carbon- or phosphate-limited conditions. This chain is Uptake hydrogenase large subunit (hupB), found in Bradyrhizobium diazoefficiens (strain JCM 10833 / BCRC 13528 / IAM 13628 / NBRC 14792 / USDA 110).